Consider the following 894-residue polypeptide: Alanine--tRNA ligase (894 aa).

Zn(2+) is bound by residues His569, His573, Cys683, and His687.

Belongs to the class-II aminoacyl-tRNA synthetase family. It depends on Zn(2+) as a cofactor.

It localises to the cytoplasm. The enzyme catalyses tRNA(Ala) + L-alanine + ATP = L-alanyl-tRNA(Ala) + AMP + diphosphate. In terms of biological role, catalyzes the attachment of alanine to tRNA(Ala) in a two-step reaction: alanine is first activated by ATP to form Ala-AMP and then transferred to the acceptor end of tRNA(Ala). Also edits incorrectly charged Ser-tRNA(Ala) and Gly-tRNA(Ala) via its editing domain. This Chloroflexus aurantiacus (strain ATCC 29366 / DSM 635 / J-10-fl) protein is Alanine--tRNA ligase.